Reading from the N-terminus, the 147-residue chain is Urease accessory protein UreE (147 aa).

Belongs to the UreE family.

It is found in the cytoplasm. Its function is as follows. Involved in urease metallocenter assembly. Binds nickel. Probably functions as a nickel donor during metallocenter assembly. The chain is Urease accessory protein UreE from Marinomonas sp. (strain MWYL1).